The chain runs to 124 residues: MPTINQLVRKGRRDKIAKVKTAALKGSPQRRGVCTRVYTTTPKKPNSALRKVARVKLTSQVEVTAYIPGEGHNLQEHSMVLVRGGRVKDLPGVRYKIIRGSLDTQGVKNRKQARSRYGAKKEKS.

The residue at position 89 (Asp-89) is a 3-methylthioaspartic acid. A disordered region spans residues 105–124 (QGVKNRKQARSRYGAKKEKS). A compositionally biased stretch (basic residues) spans 108-118 (KNRKQARSRYG).

Belongs to the universal ribosomal protein uS12 family. As to quaternary structure, part of the 30S ribosomal subunit. Contacts proteins S8 and S17. May interact with IF1 in the 30S initiation complex.

Its function is as follows. With S4 and S5 plays an important role in translational accuracy. Functionally, interacts with and stabilizes bases of the 16S rRNA that are involved in tRNA selection in the A site and with the mRNA backbone. Located at the interface of the 30S and 50S subunits, it traverses the body of the 30S subunit contacting proteins on the other side and probably holding the rRNA structure together. The combined cluster of proteins S8, S12 and S17 appears to hold together the shoulder and platform of the 30S subunit. The polypeptide is Small ribosomal subunit protein uS12 (Mycobacterium sp. (strain JLS)).